The sequence spans 640 residues: Uromodulin (640 aa).

Residues 1–24 (MGQPSLTWMLMVVVASWFITTAAT) form the signal peptide. Positions 28 to 64 (EARWCSECHSNATCTEDEAVTTCTCQEGFTGDGLTCV) constitute an EGF-like 1 domain. 21 disulfide bridges follow: Cys32-Cys41, Cys35-Cys50, Cys52-Cys63, Cys69-Cys83, Cys77-Cys92, Cys94-Cys106, Cys112-Cys126, Cys120-Cys135, Cys137-Cys148, Cys150-Cys161, Cys155-Cys170, Cys174-Cys267, Cys195-Cys282, Cys217-Cys255, Cys223-Cys287, Cys248-Cys256, Cys297-Cys306, Cys300-Cys315, Cys317-Cys347, Cys335-Cys425, and Cys366-Cys389. N-linked (GlcNAc...) asparagine glycosylation occurs at Asn38. The EGF-like 2; calcium-binding domain maps to 65–107 (DLDECAIPGAHNCSANSSCVNTPGSFSCVCPEGFRLSPGLGCT). Residues Asn76 and Asn80 are each glycosylated (N-linked (GlcNAc...) asparagine). Positions 108-149 (DVDECAEPGLSHCHALATCVNVVGSYLCVCPAGYRGDGWHCE) constitute an EGF-like 3; calcium-binding domain. Residues 150–171 (CSPGSCGPGLDCVPEGDALVCA) form a beta hairpin region. The segment at 172-291 (DPCQAHRTLD…CHLAYCTDPS (120 aa)) is D10C. Residue Asn232 is glycosylated (N-linked (GlcNAc...) (complex) asparagine). Asn275 carries an N-linked (GlcNAc...) (high mannose) asparagine glycan. The 32-residue stretch at 292–323 (SVEGTCEECSIDEDCKSNNGRWHCQCKQDFNI) folds into the EGF-like 4 domain. Residue Asn322 is glycosylated (N-linked (GlcNAc...) (complex) asparagine). Residues 334–429 (ECGANDMKVS…KINFACSYPL (96 aa)) form a ZP-N region. One can recognise a ZP domain in the interval 334–589 (ECGANDMKVS…PTCSGTRFRS (256 aa)). N-linked (GlcNAc...) (complex) asparagine glycosylation is present at Asn396. Positions 430 to 453 (DMKVSLKTALQPMVSALNIRVGGT) are flexible ZP-N/ZP-C linker; important for secretion and polymerization into filaments. Residues 454-465 (GMFTVRMALFQT) form an internal hydrophobic patch (IHP) region. The tract at residues 454–589 (GMFTVRMALF…PTCSGTRFRS (136 aa)) is ZP-C. Cystine bridges form between Cys506–Cys566, Cys527–Cys582, and Cys571–Cys578. Asn513 carries an N-linked (GlcNAc...) (complex) asparagine; alternate glycan. Asn513 carries an N-linked (GlcNAc...) (high mannose) asparagine; alternate glycan. Residues 586 to 589 (RFRS) are essential for cleavage by HPN. Residues 598-606 (VLNLGPITR) are external hydrophobic patch (EHP); regulates polymerization into filaments. Ser614 is lipidated: GPI-anchor amidated serine. A propeptide spans 615–640 (RAFSSLGLLKVWLPLLLSATLTLTFQ) (removed in mature form).

In terms of assembly, homodimer that then polymerizes into long filaments. The filaments can additionally assemble laterally to form a sheet. The filaments consist of a zigzag-shaped backbone with laterally protruding arms which interact with bacterial adhesin fimH. Two fimH molecules can bind to a single UMOD monomer. N-glycosylated. N-glycan heterogeneity at Asn-232: Hex7HexNAc6 (major) and dHex1Hex7HexNAc6 (minor); at Asn-322: dHex1Hex6HexNAc5 (minor), dHex1Hex7HexNAc6 (major) and dHex1Hex8HexNAc7 (minor); at Asn-396: Hex6HexNAc5 (major), dHex1Hex6HexNAc5 (minor) and Hex7HexNAc6 (minor). Glycosylated Asn-232 interacts with E.coli adhesin fimH. Other complex glycosylation sites may serve as binding sites for proteins from other bacteria inclduding K.pneumoniae, P.aeruginosa and S.mitis. In terms of processing, proteolytically cleaved at a conserved C-terminal proteolytic cleavage site to generate the secreted form found in urine. This cleavage is catalyzed by HPN. In terms of tissue distribution, expressed in the tubular cells of the kidney. Most abundant protein in normal urine (at protein level). Synthesized exclusively in the kidney. Expressed exclusively by epithelial cells of the thick ascending limb of Henle's loop (TALH) and of distal convoluted tubule lumen.

The protein localises to the apical cell membrane. The protein resides in the basolateral cell membrane. Its subcellular location is the cell projection. It localises to the cilium membrane. It is found in the secreted. Functionally, functions in biogenesis and organization of the apical membrane of epithelial cells of the thick ascending limb of Henle's loop (TALH), where it promotes formation of complex filamentous gel-like structure that may play a role in the water barrier permeability. May serve as a receptor for binding and endocytosis of cytokines (IL-1, IL-2) and TNF. Facilitates neutrophil migration across renal epithelia. In terms of biological role, in the urine, may contribute to colloid osmotic pressure, retards passage of positively charged electrolytes, and inhibits formation of liquid containing supersaturated salts and subsequent formation of salt crystals. Protects against urinary tract infections by binding to type 1 fimbriated E.coli. Binds to bacterial adhesin fimH which mediates the stable formation of bacterial aggregates, prevents the binding of E.coli to uroplakins UPK1A and UPK1B which act as urothelial receptors for type I fimbriae, and allows for pathogen clearance through micturation. Also promotes aggregation of other bacteria including K.pneumoniae, P.aeruginosa and S.mitis and so may also protect against other uropathogens. The protein is Uromodulin (UMOD) of Homo sapiens (Human).